The primary structure comprises 258 residues: L-aspartate dehydrogenase 1 (258 aa).

2 residues coordinate NAD(+): alanine 121 and asparagine 181. The active site involves histidine 211.

This sequence belongs to the L-aspartate dehydrogenase family.

It carries out the reaction L-aspartate + NADP(+) + H2O = oxaloacetate + NH4(+) + NADPH + H(+). It catalyses the reaction L-aspartate + NAD(+) + H2O = oxaloacetate + NH4(+) + NADH + H(+). Its pathway is cofactor biosynthesis; NAD(+) biosynthesis; iminoaspartate from L-aspartate (dehydrogenase route): step 1/1. In terms of biological role, specifically catalyzes the NAD or NADP-dependent dehydrogenation of L-aspartate to iminoaspartate. In Bordetella parapertussis (strain 12822 / ATCC BAA-587 / NCTC 13253), this protein is L-aspartate dehydrogenase 1.